Here is a 537-residue protein sequence, read N- to C-terminus: Lysosomal cobalamin transport escort protein LMBD1 (537 aa).

The Extracellular portion of the chain corresponds to 1–7 (MAAAAAE). The chain crosses the membrane as a helical span at residues 8–28 (LVIGWCIFGLLLLAILAFCWV). Topologically, residues 29 to 47 (YVRKYQSQRESEVVSTVTA) are cytoplasmic. Residues 48 to 68 (IFSLAVALITSALLPVDIFLV) traverse the membrane as a helical segment. At 69-97 (SYMKNQNGTFKDWADANVTVQIENTVLYG) the chain is on the extracellular side. N-linked (GlcNAc...) asparagine glycans are attached at residues Asn75 and Asn85. A helical membrane pass occupies residues 98–118 (YYTLYSVILFCVFFWIPFVYF). Topologically, residues 119-141 (YYEEKDEDDASKCTQIKTALKYT) are cytoplasmic. A helical membrane pass occupies residues 142–162 (LGFVVICALLLLVGAFVPLHL). The Extracellular segment spans residues 163-185 (PNNNNSTEWEKVKLLFEDLGTGQ). N-linked (GlcNAc...) asparagine glycosylation is found at Asn166 and Asn167. Residues 186 to 206 (GLAALSFSISSLTLIGMLAAI) form a helical membrane-spanning segment. Over 207-302 (TYTAYGMSAL…KFCGALRPLK (96 aa)) the chain is Cytoplasmic. Positions 229-232 (YERL) match the YERL motif; mediates interaction with adapter protein complex 2 and is essential for its function in clathrin-mediated endocytosis of INSR motif. At Thr235 the chain carries Phosphothreonine. The short motif at 291 to 294 (WTKF) is the WTKF motif; mediates interaction with adapter protein complex 2 and is essential for its function in clathrin-mediated endocytosis of INSR element. A helical membrane pass occupies residues 303–323 (IIWGIFFILVALLFVISLFLS). Over 324-361 (NLDKALHSAGIDSGFIIFGTNLSNPLNMLLPLLQTVFP) the chain is Extracellular. N-linked (GlcNAc...) asparagine glycosylation occurs at Asn344. A helical transmembrane segment spans residues 362 to 382 (LDYILITIIIMYFIFTSMAGI). Residues 383-405 (RNIGIWFFWIRLYKIRRGRTRPQ) are Cytoplasmic-facing. The helical transmembrane segment at 406–426 (ALLFLCMILLLIVLHTSYMIY) threads the bilayer. At 427–483 (SLAPQYVMYGSQNYLIESNITSDAHKGNSTLAVPKRCDADAPKDQCTVTRTYIFLHK) the chain is on the extracellular side. N-linked (GlcNAc...) asparagine glycosylation is found at Asn445 and Asn454. Residues 484-504 (FWFFSAAYYFGNWAFLVVFLI) traverse the membrane as a helical segment. The Cytoplasmic segment spans residues 505–537 (GLIVSCCKGKKSVIEGVDEDSDLSDDEPSAYSA). A phosphoserine mark is found at Ser525 and Ser528.

This sequence belongs to the LIMR family. LMBRD1 subfamily. In terms of assembly, interacts with ABCD4; this interaction induces the translocation of ABCD4 from the endoplasmic reticulum to the lysosome. Interacts with ABCD4 and MMACHC; this interaction ensures the transport of cobalamin from the lysosome to the cytoplasm. Interacts with INSR, adapter protein complex 2 and clathrin heavy chain. Post-translationally, N-glycosylated.

The protein localises to the endoplasmic reticulum membrane. It localises to the lysosome membrane. The protein resides in the cell membrane. It is found in the cytoplasmic vesicle. Its subcellular location is the clathrin-coated vesicle. Its function is as follows. Lysosomal membrane chaperone required to export cobalamin (vitamin B12) from the lysosome to the cytosol, allowing its conversion to cofactors. Targets ABCD4 transporter from the endoplasmic reticulum to the lysosome. Then forms a complex with lysosomal ABCD4 and cytoplasmic MMACHC to transport cobalamin across the lysosomal membrane. Acts as an adapter protein which plays an important role in mediating and regulating the internalization of the insulin receptor (INSR). Involved in clathrin-mediated endocytosis of INSR via its interaction with adapter protein complex 2. Essential for the initiation of gastrulation and early formation of mesoderm structures during embryogenesis. This Mus musculus (Mouse) protein is Lysosomal cobalamin transport escort protein LMBD1.